The primary structure comprises 137 residues: NADPH-dependent 7-cyano-7-deazaguanine reductase (137 aa).

The Thioimide intermediate role is filled by C51. Residue D58 is the Proton donor of the active site. Residues 73–75 and 92–93 each bind substrate; these read VEL and HE.

The protein belongs to the GTP cyclohydrolase I family. QueF type 1 subfamily.

The protein localises to the cytoplasm. It catalyses the reaction 7-aminomethyl-7-carbaguanine + 2 NADP(+) = 7-cyano-7-deazaguanine + 2 NADPH + 3 H(+). It functions in the pathway tRNA modification; tRNA-queuosine biosynthesis. In terms of biological role, catalyzes the NADPH-dependent reduction of 7-cyano-7-deazaguanine (preQ0) to 7-aminomethyl-7-deazaguanine (preQ1). This Gloeobacter violaceus (strain ATCC 29082 / PCC 7421) protein is NADPH-dependent 7-cyano-7-deazaguanine reductase.